The chain runs to 119 residues: Large ribosomal subunit protein uL24 (119 aa).

Belongs to the universal ribosomal protein uL24 family. In terms of assembly, part of the 50S ribosomal subunit.

Functionally, one of two assembly initiator proteins, it binds directly to the 5'-end of the 23S rRNA, where it nucleates assembly of the 50S subunit. One of the proteins that surrounds the polypeptide exit tunnel on the outside of the subunit. The protein is Large ribosomal subunit protein uL24 of Sulfurihydrogenibium sp. (strain YO3AOP1).